The sequence spans 556 residues: 2-isopropylmalate synthase (556 aa).

A Pyruvate carboxyltransferase domain is found at 33-307; that stretch reads PIWCSSDLRD…NPGLDFSDID (275 aa). Residues Asp42, His246, His248, and Asn282 each coordinate Mg(2+). The regulatory domain stretch occupies residues 439–556; the sequence is ANVPYALISH…SLSQTQAKAA (118 aa).

The protein belongs to the alpha-IPM synthase/homocitrate synthase family. LeuA type 2 subfamily. In terms of assembly, homodimer. It depends on Mg(2+) as a cofactor.

The protein resides in the cytoplasm. It catalyses the reaction 3-methyl-2-oxobutanoate + acetyl-CoA + H2O = (2S)-2-isopropylmalate + CoA + H(+). Its pathway is amino-acid biosynthesis; L-leucine biosynthesis; L-leucine from 3-methyl-2-oxobutanoate: step 1/4. In terms of biological role, catalyzes the condensation of the acetyl group of acetyl-CoA with 3-methyl-2-oxobutanoate (2-ketoisovalerate) to form 3-carboxy-3-hydroxy-4-methylpentanoate (2-isopropylmalate). The sequence is that of 2-isopropylmalate synthase from Pseudomonas syringae pv. syringae (strain B728a).